We begin with the raw amino-acid sequence, 539 residues long: Acrosin-binding protein (539 aa).

The N-terminal stretch at 1–25 (MRQLAAGSLLSLLKVLLLPLAPAPA) is a signal peptide. The segment at 26-106 (QDANSASTPG…ASWFESFCQF (81 aa)) is pro-ACR binding. A propeptide spans 26-269 (QDANSASTPG…NPFSFTPRVR (244 aa)) (removed in active form). Residues 186-259 (LGGQEQGQEH…PKFQSEFVSS (74 aa)) form a disordered region. The segment covering 192–211 (GQEHKQEHKQEQGQEHKQDE) has biased composition (basic and acidic residues). The segment covering 212–238 (GQEQEEQEEEQEEEGKQEEGQGTEESL) has biased composition (acidic residues). The pro-ACR binding stretch occupies residues 315–423 (LPHVDALLVL…TQIGTLKSGR (109 aa)).

As to quaternary structure, binds specifically to the 55- and 53-kDa proacrosins and the 49-kDa acrosin intermediate, but is not capable of binding 43-kDa acrosin intermediate and 32-kDa mature acrosin. In terms of processing, the N-terminus is blocked. Post-translationally, synthesized as a 60-kDa precursor, the 35-kDa mature form is post-translationally produced by the removal of the N-terminal half of the precursor during sperm maturation in the testis and/or epididymis. Phosphorylated on Tyr residues in capacitated sperm. Specifically expressed in testis.

The protein localises to the secreted. The protein resides in the cytoplasmic vesicle. It is found in the secretory vesicle. It localises to the acrosome. Its function is as follows. Acrosomal protein that maintains proacrosin (pro-ACR) as an enzymatically inactive zymogen in the acrosome. Involved also in the acrosome formation. The protein is Acrosin-binding protein of Sus scrofa (Pig).